Consider the following 334-residue polypeptide: MKKNQFLKESDVTAESVFFMKRRQVLKALGISAAALSLPHAAHADLLSWFKGNDRPPAPAGKPLEFSKPAAWQNDLPLTPADKVSGYNNFYEFGLDKADPAANAGSLKTDPWTLKISGEVAKPLTLDHDDLTRRFPLEERIYRMRCVEAWSMVVPWIGFPLHKLLALAEPTSNAKYVAFETIYAPEQMPGQQDRFIGGGLKYPYVEGLRLDEAMHPLTLMTVGVYGKALPPQNGAPVRLIVPWKYGFKGIKSIVSIKLTRECPPTTWNLAAPDEYGFYANVNPHVDHPRWSQATERFIGSGGILDVQRQPTLLFNGYADQVASLYRGLDLRENF.

A signal peptide (tat-type signal) is located at residues 1–44 (MKKNQFLKESDVTAESVFFMKRRQVLKALGISAAALSLPHAAHA). Mo-molybdopterin contacts are provided by residues asparagine 88, 91-92 (YE), cysteine 146, threonine 181, asparagine 233, arginine 238, and 249-251 (GIK).

The protein belongs to the MsrP family. In terms of assembly, heterodimer of a catalytic subunit (MsrP) and a heme-binding subunit (MsrQ). The cofactor is Mo-molybdopterin. Predicted to be exported by the Tat system. The position of the signal peptide cleavage has not been experimentally proven.

Its subcellular location is the periplasm. It carries out the reaction L-methionyl-[protein] + a quinone + H2O = L-methionyl-(S)-S-oxide-[protein] + a quinol. The enzyme catalyses L-methionyl-[protein] + a quinone + H2O = L-methionyl-(R)-S-oxide-[protein] + a quinol. Its function is as follows. Part of the MsrPQ system that repairs oxidized periplasmic proteins containing methionine sulfoxide residues (Met-O), using respiratory chain electrons. Thus protects these proteins from oxidative-stress damage caused by reactive species of oxygen and chlorine generated by the host defense mechanisms. MsrPQ is essential for the maintenance of envelope integrity under bleach stress, rescuing a wide series of structurally unrelated periplasmic proteins from methionine oxidation, including the primary periplasmic chaperone SurA and the lipoprotein Pal. The catalytic subunit MsrP is non-stereospecific, being able to reduce both (R-) and (S-) diastereoisomers of methionine sulfoxide. The protein is Protein-methionine-sulfoxide reductase catalytic subunit MsrP of Escherichia coli O17:K52:H18 (strain UMN026 / ExPEC).